The chain runs to 241 residues: Translation initiation factor IF-3 (241 aa).

Residues 178-241 (KKTEAMAEAR…EAPAEASTEA (64 aa)) form a disordered region. Residues 180 to 197 (TEAMAEAREAQAARKAEA) show a composition bias toward basic and acidic residues. Acidic residues predominate over residues 208 to 229 (ADEDIPEGELPEGEVPEAETTE). Residues 230-241 (AAEAPAEASTEA) are compositionally biased toward low complexity.

It belongs to the IF-3 family. In terms of assembly, monomer.

It localises to the cytoplasm. Its function is as follows. IF-3 binds to the 30S ribosomal subunit and shifts the equilibrium between 70S ribosomes and their 50S and 30S subunits in favor of the free subunits, thus enhancing the availability of 30S subunits on which protein synthesis initiation begins. This Streptomyces avermitilis (strain ATCC 31267 / DSM 46492 / JCM 5070 / NBRC 14893 / NCIMB 12804 / NRRL 8165 / MA-4680) protein is Translation initiation factor IF-3.